The primary structure comprises 123 residues: uncharacterized protein (123 aa).

A helical transmembrane segment spans residues 14-34 (VVLKITAVVCSVFSIRVLILA).

Its subcellular location is the membrane. This is an uncharacterized protein from Saccharomyces cerevisiae (strain ATCC 204508 / S288c) (Baker's yeast).